The following is a 238-amino-acid chain: Probable transcriptional regulatory protein Mmwyl1_2868 (238 aa).

It belongs to the TACO1 family.

It localises to the cytoplasm. The polypeptide is Probable transcriptional regulatory protein Mmwyl1_2868 (Marinomonas sp. (strain MWYL1)).